We begin with the raw amino-acid sequence, 435 residues long: MSGFLEELLGEKLVTGGGEEVDVHSLAARGISLLGLYFGCSLSAPCAQLSASLAAFYGRLRGDAAAGPGPGPGAGASAEPEPRRRLEIVFVSSDQDQRQWQDFVRDMPWLALPYKEKHRKLKLWNKYRISNIPSLIFLDATSGKVVCRNGLLVIRDDPEGLEFPWGPKPFREVIAGPLLRSNGQSLESSSLEGSHVGVYFSAHWCPPCRSLTRVLVESYRKIKEAGQKFEIIFVSADRSEDSFKQYFSEMPWLAVPYTDEARRSRLNRLYGIQGIPTLIVLDPQGEVITRQGRVEVLNDEDCRGFPWHPKPVLELSDSNAVQLNEGPCLVLFVDSEDDGESEAAKQLIQPIAEKIIAKYKAKEEEAPLLFFVAGEDDMTDSLRDYTNLPEAAPLLTILDMSARAKYVMDVEEITPAIVEAFVNDFLAEKLKPEPI.

Position 2 is an N-acetylserine (S2). One can recognise a Thioredoxin domain in the interval 167–321 (PKPFREVIAG…VLELSDSNAV (155 aa)).

Belongs to the nucleoredoxin family. Associates with the phosphatase 2A holoenzyme. Interacts with PPP2CA; the interaction is direct. Interacts with DVL1 (via PDZ domain); the interaction is direct and regulated by oxidative stress.

Its subcellular location is the cytoplasm. It is found in the cytosol. The protein localises to the nucleus. It catalyses the reaction [protein]-dithiol + NAD(+) = [protein]-disulfide + NADH + H(+). The catalysed reaction is [protein]-dithiol + NADP(+) = [protein]-disulfide + NADPH + H(+). Its function is as follows. Functions as a redox-dependent negative regulator of the Wnt signaling pathway, possibly by preventing ubiquitination of DVL3 by the BCR(KLHL12) complex. May also function as a transcriptional regulator act as a regulator of protein phosphatase 2A (PP2A). In Bos taurus (Bovine), this protein is Nucleoredoxin (NXN).